Reading from the N-terminus, the 32-residue chain is CGGAGAKCSTKSDCCSGLWCSGSGHCYHRRYT.

Cystine bridges form between C1–C15, C8–C20, and C14–C26.

It is found in the secreted. Its subcellular location is the nematocyst. Its function is as follows. Reversibly inhibits acid-sensing ion channels (ASIC) in rat dorsal root ganglia neurons. Reversibly inhibits voltage-gated potassium channels (Kv) in rat DRG neurons. The sequence is that of Acatoxin 1 from Anthopleura cascaia (Sea anemone).